We begin with the raw amino-acid sequence, 478 residues long: Protein FAM83E (478 aa).

Positions 1-293 are DUF1669; sequence MAASQLAALE…LYAASCPLPP (293 aa). Disordered regions lie at residues 292–334, 359–436, and 452–478; these read PPAP…PLAH, RART…LPPA, and DATFKLQEPRGVRPSDWAPRAGLGGQP. The span at 309–319 shows a compositional bias: basic residues; it reads RSPHRVSRRRS. Over residues 379 to 388 the composition is skewed to polar residues; it reads RLSQLSGSSD.

The protein belongs to the FAM83 family. In terms of assembly, directly interacts (via DUF1669) with CSNK1A1, CSNK1A1L, CSNK1D and CSNK1E. May interact with RAF1.

It is found in the cytoplasm. Its subcellular location is the perinuclear region. In terms of biological role, may play a role in MAPK signaling. The chain is Protein FAM83E from Homo sapiens (Human).